A 436-amino-acid polypeptide reads, in one-letter code: Glutamyl-tRNA reductase (436 aa).

Substrate contacts are provided by residues 49 to 52, serine 109, 114 to 116, and glutamine 120; these read TCNR and EGQ. Catalysis depends on cysteine 50, which acts as the Nucleophile. 198 to 203 is an NADP(+) binding site; it reads GAGRMS.

The protein belongs to the glutamyl-tRNA reductase family. As to quaternary structure, homodimer.

It catalyses the reaction (S)-4-amino-5-oxopentanoate + tRNA(Glu) + NADP(+) = L-glutamyl-tRNA(Glu) + NADPH + H(+). Its pathway is porphyrin-containing compound metabolism; protoporphyrin-IX biosynthesis; 5-aminolevulinate from L-glutamyl-tRNA(Glu): step 1/2. The protein operates within porphyrin-containing compound metabolism; chlorophyll biosynthesis. Functionally, catalyzes the NADPH-dependent reduction of glutamyl-tRNA(Glu) to glutamate 1-semialdehyde (GSA). The sequence is that of Glutamyl-tRNA reductase from Prochlorococcus marinus (strain MIT 9313).